The primary structure comprises 103 residues: Histone H4 (103 aa).

The segment covering 1-14 (MSGRGKGGKGLGKG) has biased composition (gly residues). Residues 1-20 (MSGRGKGGKGLGKGGAKRHR) form a disordered region. Serine 2 carries the N-acetylserine modification. Residue lysine 17 is modified to N6-acetyllysine. The DNA-binding element occupies 17–21 (KRHRR). Lysine 80 is modified (N6-methylated lysine).

This sequence belongs to the histone H4 family. The nucleosome is a histone octamer containing two molecules each of H2A, H2B, H3 and H4 assembled in one H3-H4 heterotetramer and two H2A-H2B heterodimers. The octamer wraps approximately 147 bp of DNA.

It localises to the nucleus. It is found in the chromosome. Its function is as follows. Core component of nucleosome. Nucleosomes wrap and compact DNA into chromatin, limiting DNA accessibility to the cellular machineries which require DNA as a template. Histones thereby play a central role in transcription regulation, DNA repair, DNA replication and chromosomal stability. DNA accessibility is regulated via a complex set of post-translational modifications of histones, also called histone code, and nucleosome remodeling. This is Histone H4 from Olisthodiscus luteus (Marine phytoflagellate).